The sequence spans 732 residues: Polyribonucleotide nucleotidyltransferase (732 aa).

Positions 515 and 521 each coordinate Mg(2+). The 61-residue stretch at 581 to 641 folds into the KH domain; that stretch reads PKLELFNVDP…KNVDAAKDYI (61 aa). An S1 motif domain is found at 672–731; sequence GDEFTGSVKSVVDFGVFIELKDGVDGLLHISKIKSPLNVGDQVKVCVSEQKGNKISLSLV.

It belongs to the polyribonucleotide nucleotidyltransferase family. It depends on Mg(2+) as a cofactor.

It localises to the cytoplasm. It carries out the reaction RNA(n+1) + phosphate = RNA(n) + a ribonucleoside 5'-diphosphate. Its function is as follows. Involved in mRNA degradation. Catalyzes the phosphorolysis of single-stranded polyribonucleotides processively in the 3'- to 5'-direction. This Campylobacter concisus (strain 13826) protein is Polyribonucleotide nucleotidyltransferase.